The sequence spans 442 residues: MQLNNRDLKSIIDNEALAYAMYTVENRAIPNMIDGFKPVQRFVIARALDLARGNKDKFHKLASIAGGVADLGYHHGENSAQDAGALMANTWNNNFPLLDGQGNFGSRTVQKAAASRYIFARVSKNFYNVYKDTEYAPVHQDKEHIPPAFYLPIIPTVLLNGVSGIATGYATYILPHSVSSVKKAVLQALQGKKVTKPKVEFPEFRGEVVEIDGQYEIRGTYKFTSRTQMHITEIPYKYDRETYVSKILDPLENKGFITWDDACGEHGFGFKVKFRKEYSLSDNEEERHAKIMKDFGLIERRSQNITVINEKGKLQVYDNVVDLIKDFVEVRKTYVQKRIDNKIKETESAFRLAFAKAHFIKKVISGEIVVQGKTRKELTEELSKIDMYSSYVDKLVGMNIFHMTSDEAKKLAEEAKAKKEENEYWKTTDVVTEYTKDLEEIK.

The region spanning 29 to 438 (IPNMIDGFKP…DVVTEYTKDL (410 aa)) is the Topo IIA-type catalytic domain. Catalysis depends on tyrosine 117, which acts as the O-(5'-phospho-DNA)-tyrosine intermediate.

The protein belongs to the type II topoisomerase family. In terms of assembly, part of the DNA topoisomerase complex made of gp39, gp52 and gp60. Mg(2+) is required as a cofactor.

The catalysed reaction is ATP-dependent breakage, passage and rejoining of double-stranded DNA.. Functionally, medium subunit of the DNA topoisomerase that untwists superhelical DNA. Controls topological states of double-stranded DNA by transient breakage and subsequent rejoining of DNA strands. This chain is DNA topoisomerase medium subunit (52), found in Enterobacteria phage T4 (Bacteriophage T4).